A 165-amino-acid polypeptide reads, in one-letter code: Nucleoside-triphosphatase THEP1 (165 aa).

Residues 7–14 (GRPGVGKT) and 93–100 (LVIIDEVG) contribute to the ATP site.

The protein belongs to the THEP1 NTPase family.

The enzyme catalyses a ribonucleoside 5'-triphosphate + H2O = a ribonucleoside 5'-diphosphate + phosphate + H(+). In terms of biological role, has nucleotide phosphatase activity towards ATP, GTP, CTP, TTP and UTP. May hydrolyze nucleoside diphosphates with lower efficiency. The polypeptide is Nucleoside-triphosphatase THEP1 (Archaeoglobus fulgidus (strain ATCC 49558 / DSM 4304 / JCM 9628 / NBRC 100126 / VC-16)).